The primary structure comprises 378 residues: Stimulator of interferon genes protein (378 aa).

Helical transmembrane passes span Ala21–Asp41 and Trp46–Leu66. S-palmitoyl cysteine attachment occurs at residues Cys88 and Cys91. 2 helical membrane passes run Leu89–Leu109 and Gly114–Leu134. The cyclic dinucleotide-binding domain (CBD) stretch occupies residues Phe153–Glu339. Residues Ser162, Tyr167, Arg238, and Thr263 each contribute to the 2',3'-cGAMP site. Residues Ser162, Tyr167, Arg238–Thr241, and Thr263 each bind 3',3'-c-di-GMP. Positions 167, 238, and 263 each coordinate 2',3'-cUAMP. The interval Glu339–Phe378 is C-terminal tail (CTT). Position 354 is a phosphoserine (Ser354). Thr355 is modified (phosphothreonine). The pLxIS motif signature appears at Leu362–Ser365. Ser365 carries the phosphoserine; by TBK1 modification.

Belongs to the STING family. Homodimer; forms a homodimer in absence of cyclic nucleotide (c-di-GMP or cGAMP). Homotetramer; in presence of cyclic nucleotide (c-di-GMP or cGAMP), forms tetramers and higher-order oligomers through side-by-side packing. Interacts (when phosphorylated) with IRF3; following activation and phosphorylation on the pLxIS motif by TBK1, recruits IRF3. Interacts with TBK1; when homodimer, leading to subsequent production of IFN-beta. Phosphorylation by TBK1 leads to activation and production of IFN-beta. Following cyclic nucleotide (c-di-GMP or cGAMP)-binding, activation and translocation from the endoplasmic reticulum, STING1 is phosphorylated by TBK1 at Ser-365 in the pLxIS motif. The phosphorylated pLxIS motif constitutes an IRF3-binding motif, leading to recruitment of the transcription factor IRF3 to induce type-I interferons and other cytokines. In contrast, lacks phosphorylation site at position 357, leading to reduced production of type-I interferons and other cytokines.

It is found in the endoplasmic reticulum membrane. The protein resides in the cytoplasm. It localises to the perinuclear region. The protein localises to the endoplasmic reticulum-Golgi intermediate compartment membrane. Its subcellular location is the golgi apparatus membrane. It is found in the cytoplasmic vesicle. The protein resides in the autophagosome membrane. It localises to the mitochondrion outer membrane. The protein localises to the cell membrane. It carries out the reaction H(+)(in) = H(+)(out). In terms of biological role, facilitator of innate immune signaling that acts as a sensor of cytosolic DNA from bacteria and viruses and promotes low production of type I interferon (IFN-alpha and IFN-beta). Compared to other mammals, STING1-dependent type I interferon induction is strongly reduced in bats, suggesting that the cGAS-STING pathway promotes a limited inflammatory response. Innate immune response is triggered in response to non-CpG double-stranded DNA from viruses and bacteria delivered to the cytoplasm. Acts by binding cyclic dinucleotides: recognizes and binds cyclic di-GMP (c-di-GMP), a second messenger produced by bacteria, cyclic UMP-AMP (2',3'-cUAMP), and cyclic GMP-AMP (cGAMP), a messenger produced by CGAS in response to DNA virus in the cytosol. Upon binding to c-di-GMP, cUAMP or cGAMP, STING1 oligomerizes, translocates from the endoplasmic reticulum and is phosphorylated by TBK1 on the pLxIS motif, leading to recruitment and subsequent activation of the transcription factor IRF3 to induce expression of type I interferon and exert a potent anti-viral state. In addition to promote the production of type I interferons, plays a direct role in autophagy. Following cGAMP-binding, STING1 buds from the endoplasmic reticulum into COPII vesicles, which then form the endoplasmic reticulum-Golgi intermediate compartment (ERGIC). The ERGIC serves as the membrane source for WIPI2 recruitment and LC3 lipidation, leading to formation of autophagosomes that target cytosolic DNA or DNA viruses for degradation by the lysosome. Promotes autophagy by acting as a proton channel that directs proton efflux from the Golgi to facilitate MAP1LC3B/LC3B lipidation. The autophagy- and interferon-inducing activities can be uncoupled and autophagy induction is independent of TBK1 phosphorylation. This is Stimulator of interferon genes protein from Rhinolophus ferrumequinum (Greater horseshoe bat).